The primary structure comprises 431 residues: Cleavage stimulation factor subunit 1 (431 aa).

6 WD repeats span residues 106 to 145 (SHKG…AKSA), 171 to 210 (DHVD…AKRA), 215 to 254 (QEAE…CFVS), 260 to 301 (QHTD…TTFE), 303 to 343 (AHDG…TLVR), and 395 to 431 (GHNN…STTD).

In terms of assembly, homodimer. The CSTF complex is composed of CSTF1 (50 kDa subunit), CSTF2 (64 kDa subunit) and CSTF3 (77 kDa subunit). Interacts (via repeats WD) directly with CSTF3. Interacts (via repeat WD6) with BARD1. Interacts with ERCC6.

It is found in the nucleus. One of the multiple factors required for polyadenylation and 3'-end cleavage of mammalian pre-mRNAs. May be responsible for the interaction of CSTF with other factors to form a stable complex on the pre-mRNA. This is Cleavage stimulation factor subunit 1 (Cstf1) from Mus musculus (Mouse).